A 641-amino-acid polypeptide reads, in one-letter code: MTTHTQDIGKEVSSVIAQSWHRCSKFMQRETWQAPHQAQGLTFESICRRKTALLTIAQAALEDAWEFMDGRPCALLILDESACILSRCGDPQTVEQLAELGFRDGSYCAESIIGSCALSLATMPGQPTKTSGDQHFKQALHPWSFCSTPVFDNHGRLFGSISLCCLVEHECVSDLSLTLAIAREVGNSLLTDSLLAESNRHLNQMYGLLESMDDGVMAWNEQGVLQFLNARAALLLHLDAQASQGKNINDLLNLPMLLRRAIKHARGLNHVEVTFESQHQFVDAVITLKPIVEEQGNSFILLLHPVEQMRQLMTSQLGKVSHTFEQMSTDDPETRRLIHFGRQAARGSFPILLCGEEGVGKELLSQAIHNESERASGPYIAVNCQLYANSVLGQDFMGSAPTDDENGRLSRLELANGGTLFLEKIEYLAPELQSALLQVIKQGVLTRLDARRLIPVDVKVIATTTVDLANLVEQNRFSRQLYYALHSFEIVIPPLRARRNSIPSLIYTRLNSLKKRFSSSLKIDDDALAQLVAYSWPGNDFELNSIIENIAISSDNGHIRLSNLPDYLFAERPGLETASSLLPASLTFTAIEKEAIIHAARVTSGRVQEMSQLLNIGRTTLWRKMKQYDIDASQFKRKHLE.

A sensor domain region spans residues 1-318 (MTTHTQDIGK…MRQLMTSQLG (318 aa)). Residues 52–189 (ALLTIAQAAL…AIAREVGNSL (138 aa)) enclose the GAF domain. Residues 203–265 (NQMYGLLESM…MLLRRAIKHA (63 aa)) form the PAS domain. A Sigma-54 factor interaction domain is found at 327–552 (MSTDDPETRR…LNSIIENIAI (226 aa)). ATP contacts are provided by residues 355–362 (GEEGVGKE) and 415–424 (ANGGTLFLEK).

Transcriptional activator of the glycerol utilization dha operon. This chain is Glycerol metabolism operon regulatory protein, found in Citrobacter freundii.